The following is a 109-amino-acid chain: Cell division protein ZapA (109 aa).

The stretch at 21-99 forms a coiled coil; the sequence is PEQRDALNQA…IEQALLEQGR (79 aa).

It belongs to the ZapA family. Type 1 subfamily. Homodimer. Interacts with FtsZ.

It localises to the cytoplasm. Activator of cell division through the inhibition of FtsZ GTPase activity, therefore promoting FtsZ assembly into bundles of protofilaments necessary for the formation of the division Z ring. It is recruited early at mid-cell but it is not essential for cell division. The chain is Cell division protein ZapA from Klebsiella pneumoniae (strain 342).